The sequence spans 452 residues: Cytochrome b-c1 complex subunit 2, mitochondrial (452 aa).

The N-terminal 14 residues, 1-14 (MKLLSRAGSFSRFY), are a transit peptide targeting the mitochondrion. Residues lysine 65, lysine 198, and lysine 249 each carry the N6-acetyllysine modification. Serine 367 is modified (phosphoserine).

It belongs to the peptidase M16 family. UQCRC2/QCR2 subfamily. In terms of assembly, component of the ubiquinol-cytochrome c oxidoreductase (cytochrome b-c1 complex, complex III, CIII), a multisubunit enzyme composed of 11 subunits. The complex is composed of 3 respiratory subunits cytochrome b, cytochrome c1 and Rieske protein UQCRFS1, 2 core protein subunits UQCRC1/QCR1 and UQCRC2/QCR2, and 6 low-molecular weight protein subunits UQCRH/QCR6, UQCRB/QCR7, UQCRQ/QCR8, UQCR10/QCR9, UQCR11/QCR10 and subunit 9, the cleavage product of Rieske protein UQCRFS1. The complex exists as an obligatory dimer and forms supercomplexes (SCs) in the inner mitochondrial membrane with NADH-ubiquinone oxidoreductase (complex I, CI) and cytochrome c oxidase (complex IV, CIV), resulting in different assemblies (supercomplex SCI(1)III(2)IV(1) and megacomplex MCI(2)III(2)IV(2)). Interacts with RAB5IF. Interacts with STMP1. Expressed in the head region and flagellum of epididymal sperm.

The protein resides in the mitochondrion inner membrane. Component of the ubiquinol-cytochrome c oxidoreductase, a multisubunit transmembrane complex that is part of the mitochondrial electron transport chain which drives oxidative phosphorylation. The respiratory chain contains 3 multisubunit complexes succinate dehydrogenase (complex II, CII), ubiquinol-cytochrome c oxidoreductase (cytochrome b-c1 complex, complex III, CIII) and cytochrome c oxidase (complex IV, CIV), that cooperate to transfer electrons derived from NADH and succinate to molecular oxygen, creating an electrochemical gradient over the inner membrane that drives transmembrane transport and the ATP synthase. The cytochrome b-c1 complex catalyzes electron transfer from ubiquinol to cytochrome c, linking this redox reaction to translocation of protons across the mitochondrial inner membrane, with protons being carried across the membrane as hydrogens on the quinol. In the process called Q cycle, 2 protons are consumed from the matrix, 4 protons are released into the intermembrane space and 2 electrons are passed to cytochrome c. The 2 core subunits UQCRC1/QCR1 and UQCRC2/QCR2 are homologous to the 2 mitochondrial-processing peptidase (MPP) subunits beta-MPP and alpha-MPP respectively, and they seem to have preserved their MPP processing properties. May be involved in the in situ processing of UQCRFS1 into the mature Rieske protein and its mitochondrial targeting sequence (MTS)/subunit 9 when incorporated into complex III. This is Cytochrome b-c1 complex subunit 2, mitochondrial (Uqcrc2) from Rattus norvegicus (Rat).